Reading from the N-terminus, the 143-residue chain is Putative pre-16S rRNA nuclease (143 aa).

This sequence belongs to the YqgF nuclease family.

Its subcellular location is the cytoplasm. In terms of biological role, could be a nuclease involved in processing of the 5'-end of pre-16S rRNA. This is Putative pre-16S rRNA nuclease from Mycoplasma capricolum subsp. capricolum (strain California kid / ATCC 27343 / NCTC 10154).